Consider the following 247-residue polypeptide: Eukaryotic translation initiation factor 6-1 (247 aa).

Belongs to the eIF-6 family. Monomer. Associates with the 60S ribosomal subunit.

It localises to the cytoplasm. Its subcellular location is the nucleus. It is found in the nucleolus. Functionally, binds to the 60S ribosomal subunit and prevents its association with the 40S ribosomal subunit to form the 80S initiation complex in the cytoplasm. May also be involved in ribosome biogenesis. In Arabidopsis thaliana (Mouse-ear cress), this protein is Eukaryotic translation initiation factor 6-1.